Reading from the N-terminus, the 97-residue chain is Co-chaperonin GroES (97 aa).

The protein belongs to the GroES chaperonin family. As to quaternary structure, heptamer of 7 subunits arranged in a ring. Interacts with the chaperonin GroEL.

It is found in the cytoplasm. Together with the chaperonin GroEL, plays an essential role in assisting protein folding. The GroEL-GroES system forms a nano-cage that allows encapsulation of the non-native substrate proteins and provides a physical environment optimized to promote and accelerate protein folding. GroES binds to the apical surface of the GroEL ring, thereby capping the opening of the GroEL channel. The sequence is that of Co-chaperonin GroES from Azotobacter vinelandii (strain DJ / ATCC BAA-1303).